A 347-amino-acid polypeptide reads, in one-letter code: NADH-ubiquinone oxidoreductase chain 2 (347 aa).

Transmembrane regions (helical) follow at residues 13–33 (IFAGTLITALSSHWFFTWVGL), 56–76 (AIKYFLTQATASMILLMAILF), 96–116 (LMIMMAMAMKLGMAPFHFWVP), 123–143 (PLTSGLLLLTWQKLAPISIMY), 149–169 (LNVSLLLTLSILSIMAGSWGG), 178–198 (ILAYSSITHMGWMMAVLPYNP), 201–221 (TILNLTIYIILTTTAFLLLNL), 247–267 (TLLSLGGLPPLTGFLPKWAII), 274–294 (NSLIIPTIMATITLLNLYFYL), and 326–346 (LPTLIALTTLLLPISPFMLMI).

The protein belongs to the complex I subunit 2 family. As to quaternary structure, core subunit of respiratory chain NADH dehydrogenase (Complex I) which is composed of 45 different subunits. Interacts with TMEM242.

The protein resides in the mitochondrion inner membrane. It catalyses the reaction a ubiquinone + NADH + 5 H(+)(in) = a ubiquinol + NAD(+) + 4 H(+)(out). Its function is as follows. Core subunit of the mitochondrial membrane respiratory chain NADH dehydrogenase (Complex I) which catalyzes electron transfer from NADH through the respiratory chain, using ubiquinone as an electron acceptor. Essential for the catalytic activity and assembly of complex I. This is NADH-ubiquinone oxidoreductase chain 2 from Homo sapiens (Human).